Here is a 96-residue protein sequence, read N- to C-terminus: Putative translation initiation factor IF-1, chloroplastic (96 aa).

In terms of domain architecture, S1-like spans 18-57 (INYVSGKIRHSFIRILPGDRVKIEVSPYDSTKGRIIYRLH).

Belongs to the IF-1 family. In terms of assembly, component of the 30S ribosomal translation pre-initiation complex which assembles on the 30S ribosome in the order IF-2 and IF-3, IF-1 and N-formylmethionyl-tRNA(fMet); mRNA recruitment can occur at any time during PIC assembly.

Its subcellular location is the plastid. It localises to the chloroplast. Functionally, one of the essential components for the initiation of protein synthesis. Stabilizes the binding of IF-2 and IF-3 on the 30S subunit to which N-formylmethionyl-tRNA(fMet) subsequently binds. Helps modulate mRNA selection, yielding the 30S pre-initiation complex (PIC). Upon addition of the 50S ribosomal subunit IF-1, IF-2 and IF-3 are released leaving the mature 70S translation initiation complex. The polypeptide is Putative translation initiation factor IF-1, chloroplastic (infA) (Nicotiana tabacum (Common tobacco)).